The following is a 275-amino-acid chain: Mitochondrial fission factor homolog A (275 aa).

The Cytoplasmic portion of the chain corresponds to 1–255; the sequence is MAEVNRIHYE…ENKERAKREM (255 aa). The disordered stretch occupies residues 100 to 171; it reads DFLEPEPAAN…PLISPEDSQN (72 aa). Positions 114 to 130 are enriched in basic and acidic residues; it reads PREEMKSHFRSRREQCR. A compositionally biased stretch (polar residues) spans 131–142; the sequence is SENSTMRRNGQI. The stretch at 223–253 forms a coiled coil; that stretch reads LTDAASLRRQIIKLNRRLQLLEHENKERAKR. The chain crosses the membrane as a helical; Anchor for type IV membrane protein span at residues 256–273; sequence VMYSLTVAFWLVNSWIWL. The Extracellular portion of the chain corresponds to 274–275; it reads RR.

It belongs to the Tango11 family.

It localises to the mitochondrion outer membrane. It is found in the peroxisome. In terms of biological role, plays a role in mitochondrial and peroxisomal fission. Promotes the recruitment and association of the fission mediator dynamin-related protein 1 (DNM1L) to the mitochondrial surface. The chain is Mitochondrial fission factor homolog A from Danio rerio (Zebrafish).